The chain runs to 461 residues: Phosphoglucosamine mutase (461 aa).

Ser-107 functions as the Phosphoserine intermediate in the catalytic mechanism. The Mg(2+) site is built by Ser-107, Asp-254, Asp-256, and Asp-258. Phosphoserine is present on Ser-107.

It belongs to the phosphohexose mutase family. Mg(2+) serves as cofactor. Post-translationally, activated by phosphorylation.

It carries out the reaction alpha-D-glucosamine 1-phosphate = D-glucosamine 6-phosphate. Functionally, catalyzes the conversion of glucosamine-6-phosphate to glucosamine-1-phosphate. This chain is Phosphoglucosamine mutase, found in Bifidobacterium longum subsp. infantis (strain ATCC 15697 / DSM 20088 / JCM 1222 / NCTC 11817 / S12).